Reading from the N-terminus, the 404-residue chain is Cytoplasmic tRNA 2-thiolation protein 2 (404 aa).

It belongs to the CTU2/NCS2 family.

It is found in the cytoplasm. The protein operates within tRNA modification; 5-methoxycarbonylmethyl-2-thiouridine-tRNA biosynthesis. Functionally, plays a central role in 2-thiolation of mcm(5)S(2)U at tRNA wobble positions of tRNA(Lys), tRNA(Glu) and tRNA(Gln). May act by forming a heterodimer with NCS6/CTU1 that ligates sulfur from thiocarboxylated URM1 onto the uridine of tRNAs at wobble position. This chain is Cytoplasmic tRNA 2-thiolation protein 2, found in Drosophila yakuba (Fruit fly).